Here is a 617-residue protein sequence, read N- to C-terminus: Electron transfer flavoprotein-ubiquinone oxidoreductase, mitochondrial (617 aa).

The N-terminal 33 residues, 1–33, are a transit peptide targeting the mitochondrion; that stretch reads MQVLLARLACPVYQCFHAIKIKKNYLPLCATRW. An FAD-binding site is contributed by 71 to 85; sequence VVIVGAGPAGLSAAA. Lys96 carries the N6-acetyllysine modification. An intramembrane segment occupies 109 to 130; sequence IGAHTLSGACLDPRALQELFPD. N6-acetyllysine is present on residues Lys132 and Lys223. A ubiquinone contacts are provided by Gly305 and Gly306. Residue Lys357 is modified to N6-acetyllysine. The stretch at 428–447 is an intramembrane region; it reads IGLDVTEYEDNLKKSWVWKE. Phosphoserine is present on Ser551. [4Fe-4S] cluster-binding residues include Cys561, Cys586, Cys589, and Cys592. One can recognise a 4Fe-4S ferredoxin-type domain in the interval 577-606; that stretch reads FRLQINAQNCVHCKTCDIKDPSQNINWVVP.

The protein belongs to the ETF-QO/FixC family. As to quaternary structure, monomer. [4Fe-4S] cluster is required as a cofactor. The cofactor is FAD.

Its subcellular location is the mitochondrion inner membrane. It catalyses the reaction a ubiquinone + reduced [electron-transfer flavoprotein] = a ubiquinol + oxidized [electron-transfer flavoprotein] + H(+). Accepts electrons from ETF and reduces ubiquinone. The protein is Electron transfer flavoprotein-ubiquinone oxidoreductase, mitochondrial (ETFDH) of Bos taurus (Bovine).